A 360-amino-acid polypeptide reads, in one-letter code: Phenylalanine--tRNA ligase alpha subunit (360 aa).

E260 serves as a coordination point for Mg(2+).

The protein belongs to the class-II aminoacyl-tRNA synthetase family. Phe-tRNA synthetase alpha subunit type 1 subfamily. Tetramer of two alpha and two beta subunits. Mg(2+) is required as a cofactor.

It localises to the cytoplasm. The enzyme catalyses tRNA(Phe) + L-phenylalanine + ATP = L-phenylalanyl-tRNA(Phe) + AMP + diphosphate + H(+). In Methylobacterium nodulans (strain LMG 21967 / CNCM I-2342 / ORS 2060), this protein is Phenylalanine--tRNA ligase alpha subunit.